Reading from the N-terminus, the 541-residue chain is MAKSLLFGEQARRSMEAGVDKLADTVRVTLGPKGRNVVLDKKFGSPLITNDGVTIAREIELEDPYENMGAQLVKEVATKTNDVAGDGTTTATLLAQAIIREGLKNVTAGANPIQIRTGIRKAVEKAVEEIKVISKPVNGKEDIARVAAISAASEEVGKLIADAMERVGNDGVITVEESKSMGTDLEVVEGMQFDRGYVSAYMVTDTEKMEAVLDDVYILITDKKISNIQEILPILEQIVQQGKKLLIISEDIEGEALSTLVLNKLRGTFTCVGVKAPGFGDRRKEMLQDIAILTGGEVISEELGRDLKDVTIDMLGTADSVKVTKENTTIVNGKGDKVAIKERVSQIRVQIEDTTSEFDKEKLQERLAKLAGGVAVIRVGAATETELKEEKLRIEDALAATKAAVEEGIVPGGGTAYIDIIPKIADLTSDIIDVKLGIDIIRKALEEPVRQIANNAGVEGSVIIEKVKASEAGVGYDALNDKYVDMLKTGIVDPTKVTRSALQNAASIASTFLTTEAAVADIPEKENTPPMAPGMGMDGMY.

ATP contacts are provided by residues 29 to 32 (TLGP), 86 to 90 (DGTTT), G413, 477 to 479 (DAL), and D493.

Belongs to the chaperonin (HSP60) family. As to quaternary structure, forms a cylinder of 14 subunits composed of two heptameric rings stacked back-to-back. Interacts with the co-chaperonin GroES.

The protein localises to the cytoplasm. It catalyses the reaction ATP + H2O + a folded polypeptide = ADP + phosphate + an unfolded polypeptide.. In terms of biological role, together with its co-chaperonin GroES, plays an essential role in assisting protein folding. The GroEL-GroES system forms a nano-cage that allows encapsulation of the non-native substrate proteins and provides a physical environment optimized to promote and accelerate protein folding. The protein is Chaperonin GroEL of Clostridium botulinum (strain 657 / Type Ba4).